The sequence spans 396 residues: Flap endonuclease 1 (396 aa).

The tract at residues 1–105 is N-domain; it reads MGIHGLTKLL…DQLAQRTERR (105 aa). Asp34 serves as a coordination point for Mg(2+). A DNA-binding site is contributed by Arg71. The Mg(2+) site is built by Asp87, Glu159, Glu161, Asp180, and Asp182. The segment at 123-254 is I-domain; that stretch reads AIEKYSKRSV…VRALQMIKKH (132 aa). Glu159 lines the DNA pocket. DNA contacts are provided by Gly232 and Asp234. Asp234 serves as a coordination point for Mg(2+). The interval 338–346 is interaction with PCNA; that stretch reads NQGRLESFF. The interval 341 to 396 is disordered; that stretch reads RLESFFTSLPKPATADKAKPKEDDKKRKAGAAAGGKDAKGGAAAKKGKFGVGGGKK. A compositionally biased stretch (basic and acidic residues) spans 354–366; it reads TADKAKPKEDDKK. The segment covering 370-384 has biased composition (low complexity); the sequence is GAAAGGKDAKGGAAA.

Belongs to the XPG/RAD2 endonuclease family. FEN1 subfamily. Interacts with PCNA. Three molecules of FEN1 bind to one PCNA trimer with each molecule binding to one PCNA monomer. PCNA stimulates the nuclease activity without altering cleavage specificity. Mg(2+) is required as a cofactor. In terms of processing, phosphorylated. Phosphorylation upon DNA damage induces relocalization to the nuclear plasma.

The protein resides in the nucleus. It is found in the nucleolus. It localises to the nucleoplasm. Its subcellular location is the mitochondrion. Structure-specific nuclease with 5'-flap endonuclease and 5'-3' exonuclease activities involved in DNA replication and repair. During DNA replication, cleaves the 5'-overhanging flap structure that is generated by displacement synthesis when DNA polymerase encounters the 5'-end of a downstream Okazaki fragment. It enters the flap from the 5'-end and then tracks to cleave the flap base, leaving a nick for ligation. Also involved in the long patch base excision repair (LP-BER) pathway, by cleaving within the apurinic/apyrimidinic (AP) site-terminated flap. Acts as a genome stabilization factor that prevents flaps from equilibrating into structures that lead to duplications and deletions. Also possesses 5'-3' exonuclease activity on nicked or gapped double-stranded DNA, and exhibits RNase H activity. Also involved in replication and repair of rDNA and in repairing mitochondrial DNA. The chain is Flap endonuclease 1 from Chlamydomonas reinhardtii (Chlamydomonas smithii).